The sequence spans 152 residues: Complexin (152 aa).

The interval 1 to 119 (MAAFIAKQMV…EEEDDDEFAK (119 aa)) is disordered. The span at 23 to 39 (DEGEKEGNENAEEEAAA) shows a compositional bias: acidic residues. Composition is skewed to basic and acidic residues over residues 41 to 82 (EEAR…VKEE) and 90 to 104 (DEGR…KEEL). The segment at 59–75 (EEEREEMRQTIRDKYGL) is interaction with the SNARE complex. A Cysteine methyl ester modification is found at Cys149. Cys149 carries S-farnesyl cysteine lipidation. The propeptide at 150–152 (SLQ) is removed in mature form.

The protein belongs to the complexin/synaphin family. As to quaternary structure, binds to the SNARE core complex containing SNAP25, synaptobrevin and syntaxin-1.

Its subcellular location is the membrane. It localises to the cytoplasm. The protein localises to the cytosol. Functionally, positively regulates a late step in synaptic vesicle exocytosis. The protein is Complexin (cpx) of Doryteuthis pealeii (Longfin inshore squid).